Consider the following 834-residue polypeptide: DNA-directed RNA polymerase subunit beta' (834 aa).

Zn(2+) is bound by residues Cys88, Cys90, Cys104, and Cys107. Positions 641, 643, and 645 each coordinate Mg(2+).

This sequence belongs to the RNA polymerase beta' chain family. RpoC1 subfamily. In plastids the minimal PEP RNA polymerase catalytic core is composed of four subunits: alpha, beta, beta', and beta''. When a (nuclear-encoded) sigma factor is associated with the core the holoenzyme is formed, which can initiate transcription. The cofactor is Mg(2+). Zn(2+) serves as cofactor.

It is found in the plastid. It carries out the reaction RNA(n) + a ribonucleoside 5'-triphosphate = RNA(n+1) + diphosphate. Its function is as follows. DNA-dependent RNA polymerase catalyzes the transcription of DNA into RNA using the four ribonucleoside triphosphates as substrates. The sequence is that of DNA-directed RNA polymerase subunit beta' (rpoC1) from Helicosporidium sp. subsp. Simulium jonesii (Green alga).